We begin with the raw amino-acid sequence, 395 residues long: Transmembrane protein 79 (395 aa).

The interval methionine 1–glutamate 115 is disordered. Topologically, residues methionine 1–serine 204 are cytoplasmic. A helical transmembrane segment spans residues valine 205–phenylalanine 225. The Extracellular segment spans residues aspartate 226–glycine 244. A helical transmembrane segment spans residues valine 245–phenylalanine 265. The Cytoplasmic portion of the chain corresponds to alanine 266–glutamine 290. Residues leucine 291 to leucine 311 traverse the membrane as a helical segment. At lysine 312 to leucine 313 the chain is on the extracellular side. The chain crosses the membrane as a helical span at residues leucine 314 to valine 334. The Cytoplasmic portion of the chain corresponds to glycine 335–tyrosine 343. Residues glycine 344–valine 364 traverse the membrane as a helical segment. Residues glutamate 365–glycine 395 are Extracellular-facing.

It localises to the lysosome. The protein resides in the golgi apparatus. Its subcellular location is the trans-Golgi network. The protein localises to the membrane. Contributes to the epidermal integrity and skin barrier function. Plays a role in the lamellar granule (LG) secretory system and in the stratum corneum (SC) epithelial cell formation. In Bos taurus (Bovine), this protein is Transmembrane protein 79 (TMEM79).